The following is a 475-amino-acid chain: MKRWPVFPRSLRQLVMLAFLLILLPLLVLAWQAWQSLNALSDQAALVNRTTLIDARRSEAMTNAALEMERSYRQYCVLDDPTLAKVYQSQRKRYSEMLDAHAGVLPDDKLYQALRQDLNNLAQLQCNNSGPDAAAAARLEAFASANTEMVQATRTVVFSRGQQLQREIAERGQYFGWQSLVLFLVSLVMVLLFTRMIIGPVKNIERMINRLGEGRSLGNSVSFSGPSELRSVGQRILWLSERLSWLESQRHQFLRHLSHELKTPLASMREGTELLADQVVGPLTPEQKEVVSILDSSSRNLQKLIEQLLDYNRKQADSAVELDNVELAPLVETVVSAHSLPARAKMMHTDVDLKATACLAEPMLLMSVLDNLYSNAVHYGAESGNICLRSSLHGARVYIDVINTGTPIPQEERAMIFEPFFQGSHQRKGAVKGSGLGLSIARDCIRRMQGELYLVDESGQDVCFRIELPSSKNTK.

Topologically, residues 1–13 (MKRWPVFPRSLRQ) are cytoplasmic. A helical membrane pass occupies residues 14 to 34 (LVMLAFLLILLPLLVLAWQAW). The Periplasmic portion of the chain corresponds to 35–173 (QSLNALSDQA…LQREIAERGQ (139 aa)). Residues 174–194 (YFGWQSLVLFLVSLVMVLLFT) traverse the membrane as a helical segment. The Cytoplasmic segment spans residues 195–475 (RMIIGPVKNI…IELPSSKNTK (281 aa)). The 217-residue stretch at 256-472 (HLSHELKTPL…CFRIELPSSK (217 aa)) folds into the Histidine kinase domain. His259 is modified (phosphohistidine; by autocatalysis).

Autophosphorylated.

It localises to the cell inner membrane. It catalyses the reaction ATP + protein L-histidine = ADP + protein N-phospho-L-histidine.. Member of the two-component regulatory system QseF/QseE involved in the regulation of virulence and metabolism in EHEC. Required for pedestal formation in host epithelial cells during infection. Autophosphorylates in response to epinephrine, sulfate or phosphate and then probably transfers its phosphate group to QseF. The chain is Sensor histidine kinase QseE (qseE) from Escherichia coli O157:H7.